The chain runs to 152 residues: Arginine repressor (152 aa).

Belongs to the ArgR family.

It is found in the cytoplasm. It functions in the pathway amino-acid biosynthesis; L-arginine biosynthesis [regulation]. Functionally, regulates arginine biosynthesis genes. This is Arginine repressor from Caldicellulosiruptor bescii (strain ATCC BAA-1888 / DSM 6725 / KCTC 15123 / Z-1320) (Anaerocellum thermophilum).